A 52-amino-acid polypeptide reads, in one-letter code: ATP synthase F(0) complex subunit 8 (52 aa).

A helical transmembrane segment spans residues 10-30 (LMTHLWAWLMLYLTTQKIKTF).

This sequence belongs to the ATPase protein 8 family. In terms of assembly, component of the ATP synthase complex composed at least of ATP5F1A/subunit alpha, ATP5F1B/subunit beta, ATP5MC1/subunit c (homooctomer), MT-ATP6/subunit a, MT-ATP8/subunit 8, ATP5ME/subunit e, ATP5MF/subunit f, ATP5MG/subunit g, ATP5MK/subunit k, ATP5MJ/subunit j, ATP5F1C/subunit gamma, ATP5F1D/subunit delta, ATP5F1E/subunit epsilon, ATP5PF/subunit F6, ATP5PB/subunit b, ATP5PD/subunit d, ATP5PO/subunit OSCP. ATP synthase complex consists of a soluble F(1) head domain (subunits alpha(3) and beta(3)) - the catalytic core - and a membrane F(0) domain - the membrane proton channel (subunits c, a, 8, e, f, g, k and j). These two domains are linked by a central stalk (subunits gamma, delta, and epsilon) rotating inside the F1 region and a stationary peripheral stalk (subunits F6, b, d, and OSCP).

The protein localises to the mitochondrion membrane. Functionally, subunit 8, of the mitochondrial membrane ATP synthase complex (F(1)F(0) ATP synthase or Complex V) that produces ATP from ADP in the presence of a proton gradient across the membrane which is generated by electron transport complexes of the respiratory chain. ATP synthase complex consist of a soluble F(1) head domain - the catalytic core - and a membrane F(1) domain - the membrane proton channel. These two domains are linked by a central stalk rotating inside the F(1) region and a stationary peripheral stalk. During catalysis, ATP synthesis in the catalytic domain of F(1) is coupled via a rotary mechanism of the central stalk subunits to proton translocation. In vivo, can only synthesize ATP although its ATP hydrolase activity can be activated artificially in vitro. Part of the complex F(0) domain. This Lycodon semicarinatus (Ryukyu odd-tooth snake) protein is ATP synthase F(0) complex subunit 8.